The chain runs to 138 residues: MNIIDSFEQKNIAKLTANKNIPDFEAGDTVKVTVKIIDRSIEKDGKEKLTERFQAYEGVVIAKRNRGITSSFLVRKISHGEGVERRFMTYSPIVHSIDVVKYGVVRRAKLYYLRNRSGKSARIKERHIPIAKNQAVKA.

Belongs to the bacterial ribosomal protein bL19 family.

Its function is as follows. This protein is located at the 30S-50S ribosomal subunit interface and may play a role in the structure and function of the aminoacyl-tRNA binding site. This is Large ribosomal subunit protein bL19 from Rickettsia canadensis (strain McKiel).